The chain runs to 154 residues: Endoribonuclease YbeY (154 aa).

His113, His117, and His123 together coordinate Zn(2+).

Belongs to the endoribonuclease YbeY family. Requires Zn(2+) as cofactor.

It localises to the cytoplasm. Functionally, single strand-specific metallo-endoribonuclease involved in late-stage 70S ribosome quality control and in maturation of the 3' terminus of the 16S rRNA. In Aeromonas hydrophila subsp. hydrophila (strain ATCC 7966 / DSM 30187 / BCRC 13018 / CCUG 14551 / JCM 1027 / KCTC 2358 / NCIMB 9240 / NCTC 8049), this protein is Endoribonuclease YbeY.